A 379-amino-acid chain; its full sequence is Citrate utilization protein B (379 aa).

Positions 28, 31, 34, 38, 62, 65, 68, and 72 each coordinate [4Fe-4S] cluster.

This is Citrate utilization protein B (citB) from Escherichia coli.